A 187-amino-acid chain; its full sequence is UPF0301 protein YE3428 (187 aa).

Belongs to the UPF0301 (AlgH) family.

This is UPF0301 protein YE3428 from Yersinia enterocolitica serotype O:8 / biotype 1B (strain NCTC 13174 / 8081).